The primary structure comprises 194 residues: Ras-related protein Rab-22A (194 aa).

12–20 (GDTGVGKSS) contacts GTP. The short motif at 34–42 (INPTIGASF) is the Effector region element. GTP is bound by residues 60–64 (DTAGQ), 118–121 (NKCD), and 148–150 (SAK). Positions 170-194 (DANPPSGGKGFKLRRQPSEPQRSCC) are disordered. 2 S-geranylgeranyl cysteine lipidation sites follow: C193 and C194.

Belongs to the small GTPase superfamily. Rab family. Interacts directly with ZFYVE20. Interacts (in its GTP-bound form) with RINL and RABGEF1. Binds EEA1.

It localises to the endosome membrane. The protein localises to the cell membrane. The protein resides in the early endosome. Its subcellular location is the late endosome. It is found in the cell projection. It localises to the ruffle. The protein localises to the cytoplasmic vesicle. The protein resides in the phagosome. Its subcellular location is the phagosome membrane. Functionally, plays a role in endocytosis and intracellular protein transport. Mediates trafficking of TF from early endosomes to recycling endosomes. Required for NGF-mediated endocytosis of NTRK1, and subsequent neurite outgrowth. Binds GTP and GDP and has low GTPase activity. Alternates between a GTP-bound active form and a GDP-bound inactive form. This is Ras-related protein Rab-22A (RAB22A) from Canis lupus familiaris (Dog).